Here is a 36-residue protein sequence, read N- to C-terminus: Neurotoxin PRTx26An0C3 (36 aa).

3 disulfides stabilise this stretch: Cys-3/Cys-17, Cys-10/Cys-22, and Cys-16/Cys-34.

Expressed by the venom gland.

The protein resides in the secreted. Its function is as follows. Neurotoxin. Causes spastic paralysis and death in mice. Moderate inhibitor of L-type calcium channels (Cav1/CACNA1). In Phoneutria nigriventer (Brazilian armed spider), this protein is Neurotoxin PRTx26An0C3.